The following is a 257-amino-acid chain: NAD-capped RNA hydrolase NudC (257 aa).

Residues K25 and R69 each coordinate substrate. C98 and C101 together coordinate Zn(2+). E111 is a binding site for substrate. Zn(2+) is bound by residues C116 and C119. Y124 is a binding site for substrate. The 124-residue stretch at 125–248 folds into the Nudix hydrolase domain; sequence PQIAPCIIVA…TVARRLIEDT (124 aa). A divalent metal cation contacts are provided by A158, E174, and E178. The Nudix box motif lies at 159–180; sequence GFVEVGETLEQAVAREVMEESG. 192-199 is a binding site for substrate; it reads QPWPFPQS. E219 serves as a coordination point for a divalent metal cation. A241 is a binding site for substrate.

This sequence belongs to the Nudix hydrolase family. NudC subfamily. As to quaternary structure, homodimer. The cofactor is Mg(2+). Mn(2+) serves as cofactor. Zn(2+) is required as a cofactor.

It carries out the reaction a 5'-end NAD(+)-phospho-ribonucleoside in mRNA + H2O = a 5'-end phospho-adenosine-phospho-ribonucleoside in mRNA + beta-nicotinamide D-ribonucleotide + 2 H(+). It catalyses the reaction NAD(+) + H2O = beta-nicotinamide D-ribonucleotide + AMP + 2 H(+). The catalysed reaction is NADH + H2O = reduced beta-nicotinamide D-ribonucleotide + AMP + 2 H(+). In terms of biological role, mRNA decapping enzyme that specifically removes the nicotinamide adenine dinucleotide (NAD) cap from a subset of mRNAs by hydrolyzing the diphosphate linkage to produce nicotinamide mononucleotide (NMN) and 5' monophosphate mRNA. The NAD-cap is present at the 5'-end of some mRNAs and stabilizes RNA against 5'-processing. Has preference for mRNAs with a 5'-end purine. Catalyzes the hydrolysis of a broad range of dinucleotide pyrophosphates. In Shigella flexneri serotype 5b (strain 8401), this protein is NAD-capped RNA hydrolase NudC.